Consider the following 64-residue polypeptide: Large ribosomal subunit protein bL35 (64 aa).

A disordered region spans residues 1–56 (MPKMKSNKSVAARFKLTGSGQLKRTRPGKRHKLSKKSSQEKRNLSKQPLVDKGQVG). The segment covering 23 to 35 (KRTRPGKRHKLSK) has biased composition (basic residues).

It belongs to the bacterial ribosomal protein bL35 family.

This is Large ribosomal subunit protein bL35 from Chlamydia abortus (strain DSM 27085 / S26/3) (Chlamydophila abortus).